The following is a 706-amino-acid chain: Centrosomal protein kizuna (706 aa).

A coiled-coil region spans residues 63–113 (QRAKTRNLELLGNVENLASKLKEFSIDCSRLLQKRMEYKNHITRLKKDRRK). Residues 105–116 (TRLKKDRRKMGS) show a composition bias toward basic residues. Disordered stretches follow at residues 105–184 (TRLK…LCMH), 215–347 (VREK…ASRG), 571–603 (EIKP…QSPV), 620–665 (SVAQ…KTKP), and 677–706 (ESDD…DFYD). Residues 118–127 (GKSEADEHPS) show a composition bias toward basic and acidic residues. Polar residues-rich tracts occupy residues 128–156 (RLST…NDGA) and 164–180 (HTEQ…SQSG). Positions 215–251 (VREKQMESDWDISQRAREQQRQEELKSPHTTLKEAEV) are enriched in basic and acidic residues. Positions 272-283 (TRSPSPDTTDPS) are enriched in low complexity. The segment covering 293–304 (GEDEEESAEDKD) has biased composition (acidic residues). Residues 308-320 (PINQNHSDYTSNI) are compositionally biased toward polar residues. Residues 586–598 (EEQEIQSAEEDSA) show a composition bias toward acidic residues. Positions 638 to 648 (PDAHKLEKPEV) are enriched in basic and acidic residues.

It belongs to the kizuna family.

Its subcellular location is the cytoplasm. The protein localises to the cytoskeleton. The protein resides in the microtubule organizing center. It is found in the centrosome. It localises to the cilium basal body. In terms of biological role, centrosomal protein required for establishing a robust mitotic centrosome architecture that can endure the forces that converge on the centrosomes during spindle formation. Required for stabilizing the expanded pericentriolar material around the centriole. This is Centrosomal protein kizuna (kiz) from Danio rerio (Zebrafish).